A 713-amino-acid chain; its full sequence is Phospholipase A1 PLIP2, chloroplastic (713 aa).

The transit peptide at 1 to 32 directs the protein to the chloroplast; the sequence is MDSLCLNSGLHGVIPAITAVGNGGCGGVVEVR. Disordered regions lie at residues 118–140 and 232–261; these read WKHE…DEEV and ALKA…EKNK. Residues 122–140 are compositionally biased toward acidic residues; that stretch reads EEEDDDEVEDEDGDEDEEV. Residues 426–430 carry the GXSXG motif; sequence GHSLG. S428 (acyl-ester intermediate) is an active-site residue. Residues D489 and H608 each act as charge relay system in the active site.

The protein belongs to the AB hydrolase superfamily. Lipase family.

The protein localises to the plastid. Its subcellular location is the chloroplast membrane. It is found in the chloroplast stroma. The catalysed reaction is a 1,2-diacyl-3-O-(beta-D-galactosyl)-sn-glycerol + 2 H2O = 3-beta-D-galactosyl-sn-glycerol + 2 a fatty acid + 2 H(+). It carries out the reaction a 1,2-diacyl-sn-glycero-3-phosphocholine + H2O = a 2-acyl-sn-glycero-3-phosphocholine + a fatty acid + H(+). The enzyme catalyses 1-hexadecanoyl-2-(9Z-octadecenoyl)-sn-glycero-3-phosphocholine + H2O = 2-(9Z-octadecenoyl)-sn-glycero-3-phosphocholine + hexadecanoate + H(+). It catalyses the reaction 1,2-di-(9Z-octadecenoyl)-sn-glycero-3-phosphocholine + H2O = 2-(9Z-octadecenoyl)-sn-glycero-3-phosphocholine + (9Z)-octadecenoate + H(+). The catalysed reaction is 1-octadecanoyl-2-(9Z-octadecenoyl)-sn-glycero-3-phosphocholine + H2O = 2-(9Z-octadecenoyl)-sn-glycero-3-phosphocholine + octadecanoate + H(+). It carries out the reaction 1-octadecanoyl-2-(9Z,12Z)-octadecadienoyl-sn-glycero-3-phosphocholine + H2O = 2-(9Z,12Z-octadecadienoyl)-sn-glycero-3-phosphocholine + octadecanoate + H(+). The enzyme catalyses 1,2-di-(9Z,12Z-octadecadienoyl)-sn-glycero-3-phosphocholine + H2O = 2-(9Z,12Z-octadecadienoyl)-sn-glycero-3-phosphocholine + (9Z,12Z)-octadecadienoate + H(+). It catalyses the reaction 1-(9Z-octadecenoyl)-2-hexadecanoyl-sn-glycero-3-phosphocholine + H2O = 2-hexadecanoyl-sn-glycero-3-phosphocholine + (9Z)-octadecenoate + H(+). Its function is as follows. Sn-1-specific phospholipase A1 that catalyzes the initial step of oxylipins and jasmonate (JA) biosynthesis. Hydrolyzes polyunsaturated acyl groups preferentially from chloroplastic monogalactosyldiacylglycerol (MGDG). May function downstream of abscisic acid (ABA) and provide a link between ABA-mediated abiotic stress responses and oxylipin and JA signalings. In vitro, possesses broad substrate specificity. Can hydrolyze the galactolipids monogalactosyldiacylglycerol (MGDG) and digalactosyldiacylglycerol (DGDG), the sulfolipid sulfoquinovosyldiacylglycerol (SQDG), and the phoshpolipids phosphatidylcholine (PC), and phosphatidylglycerol (PG). This Arabidopsis thaliana (Mouse-ear cress) protein is Phospholipase A1 PLIP2, chloroplastic.